Reading from the N-terminus, the 1462-residue chain is Gag-Pol polyprotein (1462 aa).

G2 carries the N-myristoyl glycine; by host lipid modification. A Nuclear export signal motif is present at residues 16-22 (WESIRLK). A Nuclear localization signal motif is present at residues 26–32 (RKKYLIK). Polar residues-rich tracts occupy residues 113–125 (NNST…QRQN) and 135–151 (PSGN…TPSG). Residues 113–153 (NNSTATSSGQRQNAGEKEETVPPSGNTGNTGRATETPSGSR) are disordered. Y155 carries the phosphotyrosine; by host modification. CCHC-type zinc fingers lie at residues 417 to 434 (LQCF…NCRA) and 438 to 455 (KGCW…DCTT). The interval 482–513 (EHPREREGSGAGDSTDTSGANCPTTGDDDERR) is disordered. A Peptidase A2 domain is found at 535–604 (CQALLDTGAD…TPINIIGRNI (70 aa)). D540 functions as the For protease activity; shared with dimeric partner in the catalytic mechanism. The 191-residue stretch at 658–848 (EGKISAVGPE…PPFMWMGYEL (191 aa)) folds into the Reverse transcriptase domain. Mg(2+) contacts are provided by D724, D799, and D800. The interval 841–849 (FMWMGYELH) is RT 'primer grip'. The short motif at 1012–1028 (WSQWWTDYWQVTWVPEW) is the Tryptophan repeat motif element. The RNase H type-1 domain maps to 1048–1171 (IPEAETFYVD…VDKLVSKNIR (124 aa)). Residues D1057, E1092, D1112, and D1163 each contribute to the Mg(2+) site. The segment at 1177–1218 (DGINEAQEDHDKYHSNWKALADEYNLPPVVAKEIIAQCPKCH) adopts an Integrase-type zinc-finger fold. Zn(2+) contacts are provided by H1186, H1190, C1214, and C1217. Positions 1228–1378 (VDYSPEIWQI…TAGERLLDIL (151 aa)) constitute an Integrase catalytic domain. Mg(2+)-binding residues include D1238 and D1290. The integrase-type DNA-binding region spans 1397-1444 (FRVYYRDARDPIWKGPARLLWKGEGAVVIKEGEDIKVVPRRKAKIIKE).

In terms of assembly, homotrimer. Interacts with gp41 (via C-terminus). Homodimer. The active site consists of two apposed aspartic acid residues. As to quaternary structure, heterodimer of p66 RT and p51 RT (RT p66/p51). Heterodimerization of RT is essential for DNA polymerase activity. Despite the sequence identities, p66 RT and p51 RT have distinct folding. In terms of assembly, homotetramer; may further associate as a homohexadecamer. The cofactor is Mg(2+). In terms of processing, specific enzymatic cleavages by the viral protease yield mature proteins. The protease is released by autocatalytic cleavage. The polyprotein is cleaved during and after budding, this process is termed maturation. Proteolytic cleavage of p66 RT removes the RNase H domain to yield the p51 RT subunit. Capsid protein p24 is phosphorylated.

The protein resides in the virion. It localises to the host nucleus. Its subcellular location is the host cytoplasm. The protein localises to the host cell membrane. The catalysed reaction is Specific for a P1 residue that is hydrophobic, and P1' variable, but often Pro.. It catalyses the reaction Endohydrolysis of RNA in RNA/DNA hybrids. Three different cleavage modes: 1. sequence-specific internal cleavage of RNA. Human immunodeficiency virus type 1 and Moloney murine leukemia virus enzymes prefer to cleave the RNA strand one nucleotide away from the RNA-DNA junction. 2. RNA 5'-end directed cleavage 13-19 nucleotides from the RNA end. 3. DNA 3'-end directed cleavage 15-20 nucleotides away from the primer terminus.. It carries out the reaction 3'-end directed exonucleolytic cleavage of viral RNA-DNA hybrid.. The enzyme catalyses DNA(n) + a 2'-deoxyribonucleoside 5'-triphosphate = DNA(n+1) + diphosphate. The viral protease is inhibited by many synthetic protease inhibitors (PIs), such as amprenavir, atazanavir, indinavir, loprinavir, nelfinavir, ritonavir and saquinavir. RT can be inhibited either by nucleoside RT inhibitors (NRTIs) or by non nucleoside RT inhibitors (NNRTIs). NRTIs act as chain terminators, whereas NNRTIs inhibit DNA polymerization by binding a small hydrophobic pocket near the RT active site and inducing an allosteric change in this region. Classical NRTIs are abacavir, adefovir (PMEA), didanosine (ddI), lamivudine (3TC), stavudine (d4T), tenofovir (PMPA), zalcitabine (ddC), and zidovudine (AZT). Classical NNRTIs are atevirdine (BHAP U-87201E), delavirdine, efavirenz (DMP-266), emivirine (I-EBU), and nevirapine (BI-RG-587). The tritherapies used as a basic effective treatment of AIDS associate two NRTIs and one NNRTI. Use of protease inhibitors in tritherapy regimens permit more ambitious therapeutic strategies. Its function is as follows. Gag-Pol polyprotein and Gag polyprotein may regulate their own translation, by the binding genomic RNA in the 5'-UTR. At low concentration, Gag-Pol and Gag would promote translation, whereas at high concentration, the polyproteins encapsidate genomic RNA and then shut off translation. In terms of biological role, matrix protein p17 has two main functions: in infected cell, it targets Gag and Gag-pol polyproteins to the plasma membrane via a multipartite membrane-binding signal, that includes its myristointegration complex. The myristoylation signal and the NLS exert conflicting influences its subcellular localization. The key regulation of these motifs might be phosphorylation of a portion of MA molecules on the C-terminal tyrosine at the time of virus maturation, by virion-associated cellular tyrosine kinase. Implicated in the release from host cell mediated by Vpu. Functionally, capsid protein p24 forms the conical core that encapsulates the genomic RNA-nucleocapsid complex in the virion. The core is constituted by capsid protein hexamer subunits. The core is disassembled soon after virion entry. Interaction with host PPIA/CYPA protects the virus from restriction by host TRIM5-alpha and from an unknown antiviral activity in host cells. This capsid restriction by TRIM5 is one of the factors which restricts SIV to the simian species. Nucleocapsid protein p7 encapsulates and protects viral dimeric unspliced (genomic) RNA. Binds these RNAs through its zinc fingers. Facilitates rearangement of nucleic acid secondary structure during retrotranscription of genomic RNA. This capability is referred to as nucleic acid chaperone activity. Its function is as follows. The aspartyl protease mediates proteolytic cleavages of Gag and Gag-Pol polyproteins during or shortly after the release of the virion from the plasma membrane. Cleavages take place as an ordered, step-wise cascade to yield mature proteins. This process is called maturation. Displays maximal activity during the budding process just prior to particle release from the cell. Also cleaves Nef and Vif, probably concomitantly with viral structural proteins on maturation of virus particles. Hydrolyzes host EIF4GI and PABP1 in order to shut off the capped cellular mRNA translation. The resulting inhibition of cellular protein synthesis serves to ensure maximal viral gene expression and to evade host immune response. In terms of biological role, reverse transcriptase/ribonuclease H (RT) is a multifunctional enzyme that converts the viral dimeric RNA genome into dsDNA in the cytoplasm, shortly after virus entry into the cell. This enzyme displays a DNA polymerase activity that can copy either DNA or RNA templates, and a ribonuclease H (RNase H) activity that cleaves the RNA strand of RNA-DNA heteroduplexes in a partially processive 3' to 5' endonucleasic mode. Conversion of viral genomic RNA into dsDNA requires many steps. A tRNA binds to the primer-binding site (PBS) situated at the 5'-end of the viral RNA. RT uses the 3' end of the tRNA primer to perform a short round of RNA-dependent minus-strand DNA synthesis. The reading proceeds through the U5 region and ends after the repeated (R) region which is present at both ends of viral RNA. The portion of the RNA-DNA heteroduplex is digested by the RNase H, resulting in a ssDNA product attached to the tRNA primer. This ssDNA/tRNA hybridizes with the identical R region situated at the 3' end of viral RNA. This template exchange, known as minus-strand DNA strong stop transfer, can be either intra- or intermolecular. RT uses the 3' end of this newly synthesized short ssDNA to perform the RNA-dependent minus-strand DNA synthesis of the whole template. RNase H digests the RNA template except for two polypurine tracts (PPTs) situated at the 5'-end and near the center of the genome. It is not clear if both polymerase and RNase H activities are simultaneous. RNase H can probably proceed both in a polymerase-dependent (RNA cut into small fragments by the same RT performing DNA synthesis) and a polymerase-independent mode (cleavage of remaining RNA fragments by free RTs). Secondly, RT performs DNA-directed plus-strand DNA synthesis using the PPTs that have not been removed by RNase H as primers. PPTs and tRNA primers are then removed by RNase H. The 3' and 5' ssDNA PBS regions hybridize to form a circular dsDNA intermediate. Strand displacement synthesis by RT to the PBS and PPT ends produces a blunt ended, linear dsDNA copy of the viral genome that includes long terminal repeats (LTRs) at both ends. Functionally, integrase catalyzes viral DNA integration into the host chromosome, by performing a series of DNA cutting and joining reactions. This enzyme activity takes place after virion entry into a cell and reverse transcription of the RNA genome in dsDNA. The first step in the integration process is 3' processing. This step requires a complex comprising the viral genome, matrix protein, Vpr and integrase. This complex is called the pre-integration complex (PIC). The integrase protein removes 2 nucleotides from each 3' end of the viral DNA, leaving recessed CA OH's at the 3' ends. In the second step, the PIC enters cell nucleus. This process is mediated through integrase and Vpr proteins, and allows the virus to infect a non dividing cell. This ability to enter the nucleus is specific of lentiviruses, other retroviruses cannot and rely on cell division to access cell chromosomes. In the third step, termed strand transfer, the integrase protein joins the previously processed 3' ends to the 5' ends of strands of target cellular DNA at the site of integration. The 5'-ends are produced by integrase-catalyzed staggered cuts, 5 bp apart. A Y-shaped, gapped, recombination intermediate results, with the 5'-ends of the viral DNA strands and the 3' ends of target DNA strands remaining unjoined, flanking a gap of 5 bp. The last step is viral DNA integration into host chromosome. This involves host DNA repair synthesis in which the 5 bp gaps between the unjoined strands are filled in and then ligated. Since this process occurs at both cuts flanking the SIV genome, a 5 bp duplication of host DNA is produced at the ends of SIV integration. Alternatively, Integrase may catalyze the excision of viral DNA just after strand transfer, this is termed disintegration. The protein is Gag-Pol polyprotein (gag-pol) of Simian immunodeficiency virus (isolate TAN1) (SIV-cpz).